Reading from the N-terminus, the 421-residue chain is Gamma-glutamyl phosphate reductase (421 aa).

This sequence belongs to the gamma-glutamyl phosphate reductase family.

It is found in the cytoplasm. The enzyme catalyses L-glutamate 5-semialdehyde + phosphate + NADP(+) = L-glutamyl 5-phosphate + NADPH + H(+). Its pathway is amino-acid biosynthesis; L-proline biosynthesis; L-glutamate 5-semialdehyde from L-glutamate: step 2/2. Catalyzes the NADPH-dependent reduction of L-glutamate 5-phosphate into L-glutamate 5-semialdehyde and phosphate. The product spontaneously undergoes cyclization to form 1-pyrroline-5-carboxylate. The polypeptide is Gamma-glutamyl phosphate reductase (Acinetobacter baylyi (strain ATCC 33305 / BD413 / ADP1)).